A 106-amino-acid chain; its full sequence is uncharacterized protein (106 aa).

The protein resides in the mitochondrion. This is an uncharacterized protein from Arabidopsis thaliana (Mouse-ear cress).